The primary structure comprises 221 residues: Ribosomal RNA large subunit methyltransferase E (221 aa).

Residues Gly60, Trp62, Asp89, Asp105, and Asp134 each contribute to the S-adenosyl-L-methionine site. The Proton acceptor role is filled by Lys174.

This sequence belongs to the class I-like SAM-binding methyltransferase superfamily. RNA methyltransferase RlmE family.

It is found in the cytoplasm. The catalysed reaction is uridine(2552) in 23S rRNA + S-adenosyl-L-methionine = 2'-O-methyluridine(2552) in 23S rRNA + S-adenosyl-L-homocysteine + H(+). Specifically methylates the uridine in position 2552 of 23S rRNA at the 2'-O position of the ribose in the fully assembled 50S ribosomal subunit. This is Ribosomal RNA large subunit methyltransferase E from Cupriavidus necator (strain ATCC 17699 / DSM 428 / KCTC 22496 / NCIMB 10442 / H16 / Stanier 337) (Ralstonia eutropha).